Here is a 92-residue protein sequence, read N- to C-terminus: Small ribosomal subunit protein uS19 (92 aa).

Belongs to the universal ribosomal protein uS19 family.

In terms of biological role, protein S19 forms a complex with S13 that binds strongly to the 16S ribosomal RNA. This Oceanobacillus iheyensis (strain DSM 14371 / CIP 107618 / JCM 11309 / KCTC 3954 / HTE831) protein is Small ribosomal subunit protein uS19.